The primary structure comprises 244 residues: MNFEGKIALVTGASRGIGRAIAETLAARGAKVIGTATSENGAQAISDYLGANGKGLMLNVTDPASIESVLEKIRAEFGEVDILVNNAGITRDNLLMRMKDEEWNDIIETNLSSVFRLSKAVMRAMMKKRHGRIITIGSVVGTMGNGGQANYAAAKAGLIGFSKSLAREVASRGITVNVVAPGFIETDMTRALSDDQRAGILAQVPAGRLGGAQEIANAVAFLASDEAAYITGETLHVNGGMYMV.

NADP(+) is bound by residues 12-15 and Thr37; that span reads GASR. The Ca(2+) site is built by Gly50 and Gly53. Residues 59-60 and Asn86 each bind NADP(+); that span reads NV. Position 138 (Ser138) interacts with substrate. Asn145 contacts Ca(2+). Tyr151 (proton acceptor) is an active-site residue. Residues 151 to 155 and Ile184 contribute to the NADP(+) site; that span reads YAAAK. Positions 233 and 234 each coordinate Ca(2+).

It belongs to the short-chain dehydrogenases/reductases (SDR) family. As to quaternary structure, homotetramer.

The enzyme catalyses a (3R)-hydroxyacyl-[ACP] + NADP(+) = a 3-oxoacyl-[ACP] + NADPH + H(+). It carries out the reaction 3-oxobutanoyl-[ACP] + NADPH + H(+) = (3R)-hydroxybutanoyl-[ACP] + NADP(+). It catalyses the reaction 3-oxopentanoyl-[ACP] + NADPH + H(+) = (3R)-hydroxypentanoyl-[ACP] + NADP(+). The catalysed reaction is 3-oxohexanoyl-[ACP] + NADPH + H(+) = (3R)-hydroxyhexanoyl-[ACP] + NADP(+). The enzyme catalyses 3-oxoheptanoyl-[ACP] + NADPH + H(+) = (3R)-hydroxyheptanoyl-[ACP] + NADP(+). It carries out the reaction 3-oxooctanoyl-[ACP] + NADPH + H(+) = (3R)-hydroxyoctanoyl-[ACP] + NADP(+). It catalyses the reaction 3-oxononanoyl-[ACP] + NADPH + H(+) = (3R)-hydroxynonanoyl-[ACP] + NADP(+). The catalysed reaction is 3-oxodecanoyl-[ACP] + NADPH + H(+) = (3R)-hydroxydecanoyl-[ACP] + NADP(+). The enzyme catalyses 3-oxohexadecanoyl-[ACP] + NADPH + H(+) = (3R)-hydroxyhexadecanoyl-[ACP] + NADP(+). It carries out the reaction 3-oxo-(9Z)-hexadecenoyl-[ACP] + NADPH + H(+) = (3R)-hydroxy-(9Z)-hexadecenoyl-[ACP] + NADP(+). It catalyses the reaction 4-methyl-3-oxopentanoyl-[ACP] + NADPH + H(+) = (3R)-hydroxy-4-methylpentanoyl-[ACP] + NADP(+). The catalysed reaction is 5-methyl-3-oxohexanoyl-[ACP] + NADPH + H(+) = (3R)-hydroxy-5-methylhexanoyl-[ACP] + NADP(+). The enzyme catalyses 4-methyl-3-oxohexanoyl-[ACP] + NADPH + H(+) = (3R)-hydroxy-4-methylhexanoyl-[ACP] + NADP(+). The protein operates within lipid metabolism; fatty acid biosynthesis. Inhibited by cinnamic acid derivatives. Catalyzes the NADPH-dependent reduction of beta-ketoacyl-ACP substrates to beta-hydroxyacyl-ACP products, the first reductive step in the elongation cycle of fatty acid biosynthesis. The chain is 3-oxoacyl-[acyl-carrier-protein] reductase FabG (fabG) from Escherichia coli (strain K12).